The sequence spans 204 residues: Holliday junction branch migration complex subunit RuvA (204 aa).

The interval 1-64 (MIAKLTGILD…ETDQRLIGFT (64 aa)) is domain I. The tract at residues 65–143 (SAGERAWFRL…GLAGYASPVG (79 aa)) is domain II. A flexible linker region spans residues 144–154 (PGGEAFVAPPG). Positions 154–204 (GNASADAVSALQNLGFKPAVASSAVAAAVKELGEDAGLNDLVRVALKRAAG) are domain III.

Belongs to the RuvA family. In terms of assembly, homotetramer. Forms an RuvA(8)-RuvB(12)-Holliday junction (HJ) complex. HJ DNA is sandwiched between 2 RuvA tetramers; dsDNA enters through RuvA and exits via RuvB. An RuvB hexamer assembles on each DNA strand where it exits the tetramer. Each RuvB hexamer is contacted by two RuvA subunits (via domain III) on 2 adjacent RuvB subunits; this complex drives branch migration. In the full resolvosome a probable DNA-RuvA(4)-RuvB(12)-RuvC(2) complex forms which resolves the HJ.

Its subcellular location is the cytoplasm. In terms of biological role, the RuvA-RuvB-RuvC complex processes Holliday junction (HJ) DNA during genetic recombination and DNA repair, while the RuvA-RuvB complex plays an important role in the rescue of blocked DNA replication forks via replication fork reversal (RFR). RuvA specifically binds to HJ cruciform DNA, conferring on it an open structure. The RuvB hexamer acts as an ATP-dependent pump, pulling dsDNA into and through the RuvAB complex. HJ branch migration allows RuvC to scan DNA until it finds its consensus sequence, where it cleaves and resolves the cruciform DNA. The polypeptide is Holliday junction branch migration complex subunit RuvA (Novosphingobium aromaticivorans (strain ATCC 700278 / DSM 12444 / CCUG 56034 / CIP 105152 / NBRC 16084 / F199)).